The primary structure comprises 363 residues: tRNA-specific 2-thiouridylase MnmA (363 aa).

ATP contacts are provided by residues 8–15 (AMSGGVDS) and L34. C103 acts as the Nucleophile in catalysis. Residues C103 and C195 are joined by a disulfide bond. Position 127 (G127) interacts with ATP. Residues 145 to 147 (KDQ) form an interaction with tRNA region. The Cysteine persulfide intermediate role is filled by C195.

The protein belongs to the MnmA/TRMU family.

It localises to the cytoplasm. The catalysed reaction is S-sulfanyl-L-cysteinyl-[protein] + uridine(34) in tRNA + AH2 + ATP = 2-thiouridine(34) in tRNA + L-cysteinyl-[protein] + A + AMP + diphosphate + H(+). In terms of biological role, catalyzes the 2-thiolation of uridine at the wobble position (U34) of tRNA, leading to the formation of s(2)U34. This Thermobifida fusca (strain YX) protein is tRNA-specific 2-thiouridylase MnmA.